Here is a 335-residue protein sequence, read N- to C-terminus: Probable cyclin-H (335 aa).

Belongs to the cyclin family. Cyclin C subfamily.

It is found in the nucleus. Its function is as follows. Regulates CDK7, the catalytic subunit of the CDK-activating kinase (CAK) enzymatic complex. This is Probable cyclin-H (CYCH) from Echinococcus multilocularis (Fox tapeworm).